The following is a 313-amino-acid chain: L-lactate dehydrogenase (313 aa).

NAD(+) contacts are provided by residues valine 11, aspartate 32, arginine 37, tyrosine 62, and 76–77 (GV). Residues glutamine 79, arginine 85, and 117-120 (NPVD) contribute to the substrate site. Residues 115-117 (ASN) and serine 143 contribute to the NAD(+) site. A substrate-binding site is contributed by 148–151 (DTAR). Arginine 153 and histidine 168 together coordinate beta-D-fructose 1,6-bisphosphate. Histidine 175 functions as the Proton acceptor in the catalytic mechanism. Phosphotyrosine is present on tyrosine 221. Residue threonine 230 coordinates substrate.

This sequence belongs to the LDH/MDH superfamily. LDH family. Homotetramer.

The protein localises to the cytoplasm. The enzyme catalyses (S)-lactate + NAD(+) = pyruvate + NADH + H(+). Its pathway is fermentation; pyruvate fermentation to lactate; (S)-lactate from pyruvate: step 1/1. Allosterically activated by fructose 1,6-bisphosphate (FBP). In terms of biological role, catalyzes the conversion of lactate to pyruvate. The sequence is that of L-lactate dehydrogenase from Geotalea daltonii (strain DSM 22248 / JCM 15807 / FRC-32) (Geobacter daltonii).